Reading from the N-terminus, the 128-residue chain is Cytochrome c oxidase subunit 5B, mitochondrial (128 aa).

The transit peptide at 1–30 (MKRGSAALEVRELKMQTPTASCVLSTQRAN) directs the protein to the mitochondrion. An N6-acetyllysine mark is found at K67 and K85. Residues C90, C92, C112, and C115 each coordinate Zn(2+). An N6-acetyllysine modification is found at K120.

Belongs to the cytochrome c oxidase 5b family. In terms of tissue distribution, expressed in testis. Not expressed in brain, heart, liver, kidney, spleen, lung, duodenum, muscle, epididymis, vagina, uterus and ovary.

It localises to the mitochondrion inner membrane. In terms of biological role, this protein is one of the nuclear-coded polypeptide chains of cytochrome c oxidase, the terminal oxidase in mitochondrial electron transport. The protein is Cytochrome c oxidase subunit 5B, mitochondrial of Vulpes vulpes (Red fox).